The sequence spans 369 residues: DNA replication and repair protein RecF (369 aa).

30-37 (GRNAQGKT) contacts ATP.

Belongs to the RecF family.

It is found in the cytoplasm. Its function is as follows. The RecF protein is involved in DNA metabolism; it is required for DNA replication and normal SOS inducibility. RecF binds preferentially to single-stranded, linear DNA. It also seems to bind ATP. The sequence is that of DNA replication and repair protein RecF from Streptococcus agalactiae serotype Ia (strain ATCC 27591 / A909 / CDC SS700).